The following is a 303-amino-acid chain: Probable cell division protein WhiA (303 aa).

Residues 272–303 (SIQQVADALEFPITKSGVNHRLRKINKIADDL) constitute a DNA-binding region (H-T-H motif).

Belongs to the WhiA family.

In terms of biological role, involved in cell division and chromosome segregation. The protein is Probable cell division protein WhiA of Streptococcus pyogenes serotype M6 (strain ATCC BAA-946 / MGAS10394).